The chain runs to 359 residues: 3-dehydroquinate synthase (359 aa).

NAD(+) contacts are provided by residues 71–76 (DGEAYK), 105–109 (GVIGD), 129–130 (TT), lysine 142, and lysine 151. Glutamate 184, histidine 247, and histidine 264 together coordinate Zn(2+).

This sequence belongs to the sugar phosphate cyclases superfamily. Dehydroquinate synthase family. Requires Co(2+) as cofactor. It depends on Zn(2+) as a cofactor. NAD(+) is required as a cofactor.

The protein resides in the cytoplasm. It carries out the reaction 7-phospho-2-dehydro-3-deoxy-D-arabino-heptonate = 3-dehydroquinate + phosphate. It participates in metabolic intermediate biosynthesis; chorismate biosynthesis; chorismate from D-erythrose 4-phosphate and phosphoenolpyruvate: step 2/7. Functionally, catalyzes the conversion of 3-deoxy-D-arabino-heptulosonate 7-phosphate (DAHP) to dehydroquinate (DHQ). This is 3-dehydroquinate synthase from Burkholderia multivorans (strain ATCC 17616 / 249).